The primary structure comprises 453 residues: Protein ECM18 (453 aa).

The AB hydrolase-1 domain maps to 130-435 (LLIHGYAASS…SGHNLFLDNP (306 aa)). Residues 428–433 (HNLFLD) carry the HXXXXD motif motif.

Belongs to the peptidase S33 family. ABHD4/ABHD5 subfamily.

The protein resides in the mitochondrion. May be involved in cell wall organization and biogenesis. The protein is Protein ECM18 (ECM18) of Saccharomyces cerevisiae (strain ATCC 204508 / S288c) (Baker's yeast).